The following is a 173-amino-acid chain: ATP synthase subunit delta (173 aa).

It belongs to the ATPase delta chain family. As to quaternary structure, F-type ATPases have 2 components, F(1) - the catalytic core - and F(0) - the membrane proton channel. F(1) has five subunits: alpha(3), beta(3), gamma(1), delta(1), epsilon(1). F(0) has three main subunits: a(1), b(2) and c(10-14). The alpha and beta chains form an alternating ring which encloses part of the gamma chain. F(1) is attached to F(0) by a central stalk formed by the gamma and epsilon chains, while a peripheral stalk is formed by the delta and b chains.

The protein localises to the cell inner membrane. F(1)F(0) ATP synthase produces ATP from ADP in the presence of a proton or sodium gradient. F-type ATPases consist of two structural domains, F(1) containing the extramembraneous catalytic core and F(0) containing the membrane proton channel, linked together by a central stalk and a peripheral stalk. During catalysis, ATP synthesis in the catalytic domain of F(1) is coupled via a rotary mechanism of the central stalk subunits to proton translocation. In terms of biological role, this protein is part of the stalk that links CF(0) to CF(1). It either transmits conformational changes from CF(0) to CF(1) or is implicated in proton conduction. This Campylobacter lari (strain RM2100 / D67 / ATCC BAA-1060) protein is ATP synthase subunit delta.